Here is a 211-residue protein sequence, read N- to C-terminus: UPF0056 membrane protein YvbG (211 aa).

The next 6 helical transmembrane spans lie at 1–21 (MMFSFIVHVFISLFAVSNPIG), 47–67 (ILSFFILAAFLVFGHLIFKLF), 69–89 (INIHALRVAGGIFIFGIAYNL), 114–134 (ISVTPLSIPIIAGPGTIATVM), 150–170 (MIGIAAVIALTFLFFHYSAFI), and 188–208 (LILAVVAVGMIGAGLKGMFPV).

Belongs to the UPF0056 (MarC) family.

Its subcellular location is the cell membrane. The polypeptide is UPF0056 membrane protein YvbG (yvbG) (Bacillus subtilis (strain 168)).